Consider the following 156-residue polypeptide: Small ribosomal subunit protein uS7c (156 aa).

It belongs to the universal ribosomal protein uS7 family. Part of the 30S ribosomal subunit.

The protein localises to the plastid. The protein resides in the chloroplast. One of the primary rRNA binding proteins, it binds directly to 16S rRNA where it nucleates assembly of the head domain of the 30S subunit. The chain is Small ribosomal subunit protein uS7c (rps7) from Nephroselmis olivacea (Green alga).